The chain runs to 100 residues: Urease subunit gamma (100 aa).

This sequence belongs to the urease gamma subunit family. Heterotrimer of UreA (gamma), UreB (beta) and UreC (alpha) subunits. Three heterotrimers associate to form the active enzyme.

The protein localises to the cytoplasm. The enzyme catalyses urea + 2 H2O + H(+) = hydrogencarbonate + 2 NH4(+). Its pathway is nitrogen metabolism; urea degradation; CO(2) and NH(3) from urea (urease route): step 1/1. In Burkholderia cenocepacia (strain ATCC BAA-245 / DSM 16553 / LMG 16656 / NCTC 13227 / J2315 / CF5610) (Burkholderia cepacia (strain J2315)), this protein is Urease subunit gamma.